The sequence spans 319 residues: MLPTTINSLMYIIPILIAVAFLTLMERKMLGYMQLRKGPNITGPYGLLQPIADGLKLFTKEPIRPLHTSPTLLISSPILALTTAMLIWTPIPMPYALTNLNLGLLSILAISSMAVNSILWAGWASNSKYAIIGSLRAVAQTISYEVTLGIILLSILILTGGFTMQLLTTTQEFTWLLTTSWPLAMMWFISTLAETNRAPFDLTEGESELVSGFNVEYAGGPFALFFLTEYANIIVMNLLTCILFISPGPPQHPELFLINLITKTMILSLSFLWIRASYPSFRYDQLMHLLWKQFLPLTMSLCLLHTSLPISTSGIPPLS.

8 helical membrane passes run 5–25 (TINS…LTLM), 72–92 (LLIS…TPIP), 102–122 (LGLL…LWAG), 146–166 (VTLG…TMQL), 173–193 (FTWL…STLA), 225–245 (FFLT…ILFI), 254–274 (ELFL…FLWI), and 295–315 (LPLT…TSGI).

It belongs to the complex I subunit 1 family.

The protein localises to the mitochondrion inner membrane. The enzyme catalyses a ubiquinone + NADH + 5 H(+)(in) = a ubiquinol + NAD(+) + 4 H(+)(out). Core subunit of the mitochondrial membrane respiratory chain NADH dehydrogenase (Complex I) that is believed to belong to the minimal assembly required for catalysis. Complex I functions in the transfer of electrons from NADH to the respiratory chain. The immediate electron acceptor for the enzyme is believed to be ubiquinone. In Varanus flavescens (Yellow monitor), this protein is NADH-ubiquinone oxidoreductase chain 1 (MT-ND1).